Reading from the N-terminus, the 201-residue chain is MLAFILRFIKNKSYFALLAGAWVIIAGLTSQHAWSGNGLPQINGNTLAALAKQYPVVVLFRHAERCDRSDNTCLSDSSGITVNGAQNARSLGKDFNADIQNYNLYSSNTVRTIQSATWFSAGRSLTVDKKMMDCGSGIYASINTLLKKSQNKNVVIFTHNHCLTYIAKNKRGVKFEPDYLDALVMHAANGKLFLDGEFVPG.

The signal sequence occupies residues 1–35 (MLAFILRFIKNKSYFALLAGAWVIIAGLTSQHAWS).

It belongs to the phosphoglycerate mutase family. Ais subfamily.

Its subcellular location is the periplasm. Its pathway is bacterial outer membrane biogenesis; lipopolysaccharide metabolism. Its function is as follows. Catalyzes the dephosphorylation of heptose(II) of the outer membrane lipopolysaccharide core. This chain is Lipopolysaccharide core heptose(II)-phosphate phosphatase, found in Salmonella arizonae (strain ATCC BAA-731 / CDC346-86 / RSK2980).